A 505-amino-acid chain; its full sequence is Histidine ammonia-lyase (505 aa).

Residues 141–143 (ASG) constitute a cross-link (5-imidazolinone (Ala-Gly)). Ser-142 carries the 2,3-didehydroalanine (Ser) modification.

This sequence belongs to the PAL/histidase family. Post-translationally, contains an active site 4-methylidene-imidazol-5-one (MIO), which is formed autocatalytically by cyclization and dehydration of residues Ala-Ser-Gly.

The protein localises to the cytoplasm. The enzyme catalyses L-histidine = trans-urocanate + NH4(+). The protein operates within amino-acid degradation; L-histidine degradation into L-glutamate; N-formimidoyl-L-glutamate from L-histidine: step 1/3. This is Histidine ammonia-lyase from Bacillus cereus (strain ATCC 10987 / NRS 248).